Reading from the N-terminus, the 120-residue chain is V-type proton ATPase subunit F (120 aa).

It belongs to the V-ATPase F subunit family. V-ATPase is a heteromultimeric enzyme composed of a peripheral catalytic V1 complex (components A to H) attached to an integral membrane V0 proton pore complex (components: a, c, c', c'', d, e, f and VOA1).

The protein localises to the vacuole membrane. In terms of biological role, subunit of the V1 complex of vacuolar(H+)-ATPase (V-ATPase), a multisubunit enzyme composed of a peripheral complex (V1) that hydrolyzes ATP and a membrane integral complex (V0) that translocates protons. V-ATPase is responsible for acidifying and maintaining the pH of intracellular compartments. The chain is V-type proton ATPase subunit F from Schizosaccharomyces pombe (strain 972 / ATCC 24843) (Fission yeast).